The sequence spans 423 residues: WD repeat and SOCS box-containing protein 1 (423 aa).

The interval 76–100 is disordered; sequence DRSSGAGPRRLSRQNSEGSLLPGEP. 5 WD repeats span residues 125-166, 169-209, 213-252, 255-294, and 310-347; these read SRCV…LLLN, DHTD…NMVK, GHQN…LIRK, GHHN…VLLE, and ANDR…KSPQ. The SOCS box domain maps to 373–423; sequence DGSVHFWASPRSIASLQHLCRMTLRRVMPTQQVYTLPIPFSMQDYLAYKTL.

Component of a probable ECS E3 ubiquitin-protein ligase complex that contains the Elongin BC complex.

Its pathway is protein modification; protein ubiquitination. Its function is as follows. Probable substrate-recognition component of a SCF-like ECS (Elongin-Cullin-SOCS-box protein) E3 ubiquitin-protein ligase complex which mediates the ubiquitination and subsequent proteasomal degradation of target proteins. The polypeptide is WD repeat and SOCS box-containing protein 1 (wsb1) (Danio rerio (Zebrafish)).